A 253-amino-acid chain; its full sequence is MKLMDVRVSGLNVWITDKHILKGISFKAQPGTVTAIMGPSGSGKSTLIRVINRLIDLIPGARVEGEVWINNMNVMKEDPYNIRRYTGMVFQEPNPFPHMTIYENVAIGPKLHGLAKNKKELDEIVEWALKMAHLWDEVKDRLSDYPHQLSGGQRQRLSLARALALKPRVLLLDEPTANIDPVSTVKIEQSIVEYAKEEMATVIIVTHTPQQAARISDQILFLYEGRVIEYGPTKELVLRPRHELTKKFLGGEV.

Residues 1 to 249 (MKLMDVRVSG…PRHELTKKFL (249 aa)) form the ABC transporter domain. An ATP-binding site is contributed by 38 to 45 (GPSGSGKS).

Belongs to the ABC transporter superfamily. Phosphate importer (TC 3.A.1.7) family. The complex is composed of two ATP-binding proteins (PstB), two transmembrane proteins (PstC and PstA) and a solute-binding protein (PstS).

The protein resides in the cell membrane. The catalysed reaction is phosphate(out) + ATP + H2O = ADP + 2 phosphate(in) + H(+). Its function is as follows. Part of the ABC transporter complex PstSACB involved in phosphate import. Responsible for energy coupling to the transport system. The sequence is that of Phosphate import ATP-binding protein PstB from Aeropyrum pernix (strain ATCC 700893 / DSM 11879 / JCM 9820 / NBRC 100138 / K1).